We begin with the raw amino-acid sequence, 192 residues long: dTTP/UTP pyrophosphatase (192 aa).

The active-site Proton acceptor is Asp75.

This sequence belongs to the Maf family. YhdE subfamily. Requires a divalent metal cation as cofactor.

It localises to the cytoplasm. It carries out the reaction dTTP + H2O = dTMP + diphosphate + H(+). It catalyses the reaction UTP + H2O = UMP + diphosphate + H(+). In terms of biological role, nucleoside triphosphate pyrophosphatase that hydrolyzes dTTP and UTP. May have a dual role in cell division arrest and in preventing the incorporation of modified nucleotides into cellular nucleic acids. The sequence is that of dTTP/UTP pyrophosphatase from Pelodictyon phaeoclathratiforme (strain DSM 5477 / BU-1).